The primary structure comprises 399 residues: Elongation factor Tu (399 aa).

The tr-type G domain maps to 10-204 (KPHVNIGTIG…SVDESIPEPE (195 aa)). Residues 19 to 26 (GHVDHGKT) form a G1 region. Residue 19 to 26 (GHVDHGKT) participates in GTP binding. T26 contacts Mg(2+). The interval 60 to 64 (GITIN) is G2. Positions 81–84 (DCPG) are G3. GTP-binding positions include 81-85 (DCPGH) and 136-139 (NKCD). Residues 136-139 (NKCD) form a G4 region. Residues 174-176 (SAL) form a G5 region.

It belongs to the TRAFAC class translation factor GTPase superfamily. Classic translation factor GTPase family. EF-Tu/EF-1A subfamily. As to quaternary structure, monomer.

It is found in the cytoplasm. The enzyme catalyses GTP + H2O = GDP + phosphate + H(+). In terms of biological role, GTP hydrolase that promotes the GTP-dependent binding of aminoacyl-tRNA to the A-site of ribosomes during protein biosynthesis. This chain is Elongation factor Tu, found in Prochlorococcus marinus (strain MIT 9211).